Reading from the N-terminus, the 253-residue chain is Imidazole glycerol phosphate synthase subunit HisF (253 aa).

Catalysis depends on residues aspartate 11 and aspartate 130.

It belongs to the HisA/HisF family. In terms of assembly, heterodimer of HisH and HisF.

It localises to the cytoplasm. The enzyme catalyses 5-[(5-phospho-1-deoxy-D-ribulos-1-ylimino)methylamino]-1-(5-phospho-beta-D-ribosyl)imidazole-4-carboxamide + L-glutamine = D-erythro-1-(imidazol-4-yl)glycerol 3-phosphate + 5-amino-1-(5-phospho-beta-D-ribosyl)imidazole-4-carboxamide + L-glutamate + H(+). It functions in the pathway amino-acid biosynthesis; L-histidine biosynthesis; L-histidine from 5-phospho-alpha-D-ribose 1-diphosphate: step 5/9. Functionally, IGPS catalyzes the conversion of PRFAR and glutamine to IGP, AICAR and glutamate. The HisF subunit catalyzes the cyclization activity that produces IGP and AICAR from PRFAR using the ammonia provided by the HisH subunit. The polypeptide is Imidazole glycerol phosphate synthase subunit HisF (Clostridium botulinum (strain Alaska E43 / Type E3)).